Reading from the N-terminus, the 290-residue chain is uncharacterized protein (290 aa).

Residues 161–216 (SNQREVESLEQLVHEQLNKLNTESKMEFENRKNDTKNEVQQLSARIVELHNLLAVS) adopt a coiled-coil conformation. A helical transmembrane segment spans residues 236-256 (AGVVMAFTGFLVLVIPFGLGV).

Its subcellular location is the mitochondrion membrane. This is an uncharacterized protein from Schizosaccharomyces pombe (strain 972 / ATCC 24843) (Fission yeast).